Here is a 1017-residue protein sequence, read N- to C-terminus: A-type ATP synthase subunit A (1017 aa).

Residues 396–529 (FLGYLIADGT…FSYLLAKLGI (134 aa)) enclose the DOD-type homing endonuclease domain.

The protein belongs to the ATPase alpha/beta chains family. As to quaternary structure, has multiple subunits with at least A(3), B(3), C, D, E, F, H, I and proteolipid K(x). Post-translationally, this protein undergoes a protein self splicing that involves a post-translational excision of the VDE intervening region (intein) followed by peptide ligation.

Its subcellular location is the cell membrane. It catalyses the reaction ATP + H2O + 4 H(+)(in) = ADP + phosphate + 5 H(+)(out). In terms of biological role, component of the A-type ATP synthase that produces ATP from ADP in the presence of a proton gradient across the membrane. The A chain is the catalytic subunit. This chain is A-type ATP synthase subunit A, found in Pyrococcus abyssi (strain GE5 / Orsay).